A 98-amino-acid polypeptide reads, in one-letter code: ATP synthase subunit c (98 aa).

The next 2 helical transmembrane spans lie at 27–47 and 73–93; these read ALAL…GLGL and IIGA…FFVV.

It belongs to the ATPase C chain family. F-type ATPases have 2 components, F(1) - the catalytic core - and F(0) - the membrane proton channel. F(1) has five subunits: alpha(3), beta(3), gamma(1), delta(1), epsilon(1). F(0) has three main subunits: a(1), b(2) and c(10-14). The alpha and beta chains form an alternating ring which encloses part of the gamma chain. F(1) is attached to F(0) by a central stalk formed by the gamma and epsilon chains, while a peripheral stalk is formed by the delta and b chains.

The protein resides in the cell inner membrane. In terms of biological role, f(1)F(0) ATP synthase produces ATP from ADP in the presence of a proton or sodium gradient. F-type ATPases consist of two structural domains, F(1) containing the extramembraneous catalytic core and F(0) containing the membrane proton channel, linked together by a central stalk and a peripheral stalk. During catalysis, ATP synthesis in the catalytic domain of F(1) is coupled via a rotary mechanism of the central stalk subunits to proton translocation. Its function is as follows. Key component of the F(0) channel; it plays a direct role in translocation across the membrane. A homomeric c-ring of between 10-14 subunits forms the central stalk rotor element with the F(1) delta and epsilon subunits. The sequence is that of ATP synthase subunit c from Protochlamydia amoebophila (strain UWE25).